Reading from the N-terminus, the 161-residue chain is Globin CTT-VIIB-8 (161 aa).

Residues 1 to 16 (MKFFAVLALCIVGAIA) form the signal peptide. The 144-residue stretch at 18–161 (PLTADEASLV…NTYAIVVPRL (144 aa)) folds into the Globin domain. Residues His76 and His111 each contribute to the heme b site.

Belongs to the globin family. In terms of assembly, homodimer.

This chain is Globin CTT-VIIB-8 (CTT-7B8), found in Chironomus thummi thummi (Midge).